The primary structure comprises 168 residues: Large ribosomal subunit protein uL10 (168 aa).

It belongs to the universal ribosomal protein uL10 family. As to quaternary structure, part of the ribosomal stalk of the 50S ribosomal subunit. The N-terminus interacts with L11 and the large rRNA to form the base of the stalk. The C-terminus forms an elongated spine to which L12 dimers bind in a sequential fashion forming a multimeric L10(L12)X complex.

Its function is as follows. Forms part of the ribosomal stalk, playing a central role in the interaction of the ribosome with GTP-bound translation factors. This is Large ribosomal subunit protein uL10 from Levilactobacillus brevis (strain ATCC 367 / BCRC 12310 / CIP 105137 / JCM 1170 / LMG 11437 / NCIMB 947 / NCTC 947) (Lactobacillus brevis).